A 145-amino-acid chain; its full sequence is Mite group 2 allergen Eur m 2 (145 aa).

The signal sequence occupies residues 1-16 (MYKILCLSLLVAAVAA). Disulfide bonds link cysteine 24–cysteine 135, cysteine 37–cysteine 43, and cysteine 89–cysteine 94.

Belongs to the NPC2 family.

Its subcellular location is the secreted. The chain is Mite group 2 allergen Eur m 2 (EURM2) from Euroglyphus maynei (Mayne's house dust mite).